An 89-amino-acid polypeptide reads, in one-letter code: uncharacterized protein (89 aa).

This is an uncharacterized protein from Vaccinia virus (strain Copenhagen) (VACV).